The chain runs to 235 residues: Carboxy-S-adenosyl-L-methionine synthase (235 aa).

S-adenosyl-L-methionine is bound by residues Y35, 60–62, 83–84, N124, and R191; these read GCS and DN.

This sequence belongs to the class I-like SAM-binding methyltransferase superfamily. Cx-SAM synthase family. As to quaternary structure, homodimer.

The enzyme catalyses prephenate + S-adenosyl-L-methionine = carboxy-S-adenosyl-L-methionine + 3-phenylpyruvate + H2O. Its function is as follows. Catalyzes the conversion of S-adenosyl-L-methionine (SAM) to carboxy-S-adenosyl-L-methionine (Cx-SAM). The sequence is that of Carboxy-S-adenosyl-L-methionine synthase from Campylobacter jejuni subsp. jejuni serotype O:2 (strain ATCC 700819 / NCTC 11168).